We begin with the raw amino-acid sequence, 295 residues long: Ribosomal RNA small subunit methyltransferase A (295 aa).

Residues Asn-29, Leu-31, Gly-56, Glu-77, Asp-102, and Asn-128 each coordinate S-adenosyl-L-methionine.

Belongs to the class I-like SAM-binding methyltransferase superfamily. rRNA adenine N(6)-methyltransferase family. RsmA subfamily.

It is found in the cytoplasm. It carries out the reaction adenosine(1518)/adenosine(1519) in 16S rRNA + 4 S-adenosyl-L-methionine = N(6)-dimethyladenosine(1518)/N(6)-dimethyladenosine(1519) in 16S rRNA + 4 S-adenosyl-L-homocysteine + 4 H(+). Functionally, specifically dimethylates two adjacent adenosines (A1518 and A1519) in the loop of a conserved hairpin near the 3'-end of 16S rRNA in the 30S particle. May play a critical role in biogenesis of 30S subunits. This is Ribosomal RNA small subunit methyltransferase A from Listeria monocytogenes serotype 4a (strain HCC23).